The chain runs to 412 residues: Arginine biosynthesis bifunctional protein ArgJ (412 aa).

The substrate site is built by threonine 162, lysine 188, threonine 199, glutamate 285, asparagine 407, and threonine 412. The active-site Nucleophile is the threonine 199.

Belongs to the ArgJ family. In terms of assembly, heterotetramer of two alpha and two beta chains.

Its subcellular location is the cytoplasm. The enzyme catalyses N(2)-acetyl-L-ornithine + L-glutamate = N-acetyl-L-glutamate + L-ornithine. It carries out the reaction L-glutamate + acetyl-CoA = N-acetyl-L-glutamate + CoA + H(+). Its pathway is amino-acid biosynthesis; L-arginine biosynthesis; L-ornithine and N-acetyl-L-glutamate from L-glutamate and N(2)-acetyl-L-ornithine (cyclic): step 1/1. The protein operates within amino-acid biosynthesis; L-arginine biosynthesis; N(2)-acetyl-L-ornithine from L-glutamate: step 1/4. Its function is as follows. Catalyzes two activities which are involved in the cyclic version of arginine biosynthesis: the synthesis of N-acetylglutamate from glutamate and acetyl-CoA as the acetyl donor, and of ornithine by transacetylation between N(2)-acetylornithine and glutamate. The sequence is that of Arginine biosynthesis bifunctional protein ArgJ from Staphylococcus saprophyticus subsp. saprophyticus (strain ATCC 15305 / DSM 20229 / NCIMB 8711 / NCTC 7292 / S-41).